We begin with the raw amino-acid sequence, 1096 residues long: DNA-directed RNA polymerase subunit beta (1096 aa).

Positions 1070 to 1096 are disordered; sequence LMQDVNPRRSTPSRPTYESLGSDYQED.

The protein belongs to the RNA polymerase beta chain family. In cyanobacteria the RNAP catalytic core is composed of 2 alpha, 1 beta, 1 beta', 1 gamma and 1 omega subunit. When a sigma factor is associated with the core the holoenzyme is formed, which can initiate transcription.

It catalyses the reaction RNA(n) + a ribonucleoside 5'-triphosphate = RNA(n+1) + diphosphate. Functionally, DNA-dependent RNA polymerase catalyzes the transcription of DNA into RNA using the four ribonucleoside triphosphates as substrates. The chain is DNA-directed RNA polymerase subunit beta from Prochlorococcus marinus (strain MIT 9211).